The chain runs to 239 residues: Probable transcriptional regulatory protein EF_2866 (239 aa).

It belongs to the TACO1 family. YeeN subfamily.

It is found in the cytoplasm. The chain is Probable transcriptional regulatory protein EF_2866 from Enterococcus faecalis (strain ATCC 700802 / V583).